A 3010-amino-acid chain; its full sequence is MSTNPKPQRKTKRNTNRRPQDVKFPGGGQIVGGVYLLPRRGPRLGVRATRKTSERSQPRGRRQPIPKARRPEGRTWAQPGYPWPLYGNEGMGWAGWLLSPRGSRPSWGPTDPRRRSRNLGKVIDTLTCGFADLMGYIPLVGAPLGGAARALAHGVRVLEDGVNYATGNLPGCSFSIFLLALLSCLTIPASAYEVRNVSGIYHVTNDCSNSSIVYEAADMIMHTPGCVPCVRESNFSRCWVALTPTLAARNSSIPTTTIRRHVDLLVGAAALCSAMYVGDLCGSVFLVSQLFTFSPRRYETVQDCNCSIYPGHVSGHRMAWDMMMNWSPTTALVVSQLLRIPQAVVDMVAGAHWGVLAGLAYYSMVGNWAKVLIVMLLFAGVDGHTHVTGGRVASSTQSLVSWLSQGPSQKIQLVNTNGSWHINRTALNCNDSLQTGFIAALFYAHRFNASGCPERMASCRPIDEFAQGWGPITHDMPESSDQRPYCWHYAPRPCGIVPASQVCGPVYCFTPSPVVVGTTDRFGAPTYSWGENETDVLLLSNTRPPQGNWFGCTWMNSTGFTKTCGGPPCNIGGVGNNTLVCPTDCFRKHPEATYTKCGSGPWLTPRCMVDYPYRLWHYPCTVNFTVFKVRMYVGGVEHRLNAACNWTRGERCDLEDRDRSELSPLLLSTTEWQILPCSFTTLPALSTGLIHLHRNIVDVQYLYGIGSAVVSFAIKWEYILLLFLLLADARVCACLWMMLLIAQAEATLENLVVLNAASVAGAHGLLSFLVFFCAAWYIKGRLVPGAAYALYGVWPLLLLLLALPPRAYAMDREMAASCGGAVFVGLVLLTLSPYYKVFLARLIWWLQYFITRAEAHLQVWVPPLNVRGGRDAIILLTCAVHPELIFDITKLLLAILGPLMVLQAGITRVPYFVRAQGLIRACMLVRKVAGGHYVQMAFMKLAALTGTYVYDHLTPLRDWAHAGLRDLAVAVEPVVFSDMETKLITWGADTAACGDIISGLPVSARRGKEILLGPADSFGEQGWRLLAPITAYSQQTRGLLGCIITSLTGRDKNQVDGEVQVLSTATQSFLATCVNGVCWTVYHGAGSKTLAGPKGPITQMYTNVDQDLVGWPAPPGARSMTPCTCGSSDLYLVTRHADVVPVRRRGDSRGSLLSPRPISYLKGSSGGPLLCPSGHVVGIFRAAVCTRGVAKAVDFIPVESMETTMRSPVFTDNSSPPAVPQTFQVAHLHAPTGSGKSTKVPAAYAAQGYKVLVLNPSVAATLGFGAYMSKAHGIEPNIRTGVRTITTGGPITYSTYCKFLADGGCSGGAYDIIICDECHSTDSTTILGIGTVLDQAETAGARLVVLATATPPGSITVPHPNIEEVALSNTGEIPFYGKAIPIEAIKGGRHLIFCHSKKKCDELAAKLTGLGLNAVAYYRGLDVSVIPTSGDVVVVATDALMTGFTGDFDSVIDCNTCVTQTVDFSLDPTFTIETTTLPQDAVSRAQRRGRTGRGRSGIYRFVTPGERPSGMFDSSVLCECYDAGCAWYELTPAETSVRLRAYLNTPGLPVCQDHLEFWESVFTGLTHIDAHFLSQTKQAGDNLPYLVAYQATVCARAQAPPPSWDQMWKCLIRLKPTLHGPTPLLYRLGAVQNEVTLTHPITKYIMACMSADLEVVTSTWVLVGGVLAALAAYCLTTGSVVIVGRIILSGRPAVIPDREVLYQEFDEMEECASHLPYIEQGMQLAEQFKQKALGLLQTATKQAEAAAPVVESKWRALEVFWAKHMWNFISGIQYLAGLSTLPGNPAIASLMAFTASITSPLTTQNTLLFNILGGWVAAQLAPPSAASAFVGAGIAGAAVGSIGLGKVLVDILAGYGAGVAGALVAFKVMSGEMPSTEDLVNLLPAILSPGALVVGVVCAAILRRHVGPGEGAVQWMNRLIAFASRGNHVSPTHYVPESDAAARVTQILSSLTITQLLKRLHQWINEDCSTPCSGSWLKDVWDWICTVLSDFKTWLQSKLLPRLPGLPFLSCQRGYKGVWRGDGIMQTTCPCGAQITGHVKNGSMRIVGPKTCSNTWHGTFPINAYTTGPCTPSPAPNYSRALWRVAAEEYVEVTRVGDFHYVTGMTTDNVKCPCQVPAPEFFTEVDGVRLHRYAPVCKPLLREEVVFQVGLNQYLVGSQLPCEPEPDVAVLTSMLTDPSHITAETAKRRLARGSPPSLASSSASQLSAPSLKATCTTHHDSPDADLIEANLLWRQEMGGNITRVESENKVVILDSFDPIRAVEDEREISVPAEILRKPRKFPPALPIWARPDYNPPLLESWKDPDYVPPVVHGCPLPSTKAPPIPPPRRKRTVVLTESTVSSALAELATKTFGSSGSSAVDSGTATGPPDQASDDGDKGSDVESYSSMPPLEGEPGDPDLSDGSWSTVSGEAGEDVVCCSMSYTWTGALITPCAAEESKLPINPLSNSLLRHHSMVYSTTSRSASLRQKKVTFDRLQVLDDHYRDVLKEMKAKASTVKARLLSIEEACKLTPPHSAKSKFGYGAKDVRSLSSRAVNHIRSVWEDLLEDTETPIDTTIMAKNEVFCVQPEKGGRKPARLIVFPDLGVRVCEKMALYDVVSTLPQAVMGPSYGFQYSPGQRVEFLVNTWKSKKCPMGFSYDTRCFDSTVTENDIRTEESIYQCCDLAPEARQAIRSLTERLYVGGPLTNSKGQNCGYRRCRASGVLTTSCGNTLTCYLKATAACRAAKLQDCTMLVNGDDLVVICESAGTQEDAAALRAFTEAMTRYSAPPGDPPQPEYDLELITSCSSNVSVAHDASGKRVYYLTRDPTTPLARAAWETVRHTPVNSWLGNIIMYAPTLWARMILMTHFFSILLAQEQLEKALDCQIYGACYSIEPLDLPQIIERLHGLSAFSLHSYSPGEINRVASCLRKLGVPPLRVWRHRARSVRAKLLSQGGRAATCGKYLFNWAVKTKLKLTPIPAASQLDLSGWFVAGYNGGDIYHSLSRARPRWFMLCLLLLSVGVGIYLLPNR.

At serine 2 the chain carries N-acetylserine; by host. The tract at residues 2–23 (STNPKPQRKTKRNTNRRPQDVK) is interaction with STAT1. Positions 2-58 (STNPKPQRKTKRNTNRRPQDVKFPGGGQIVGGVYLLPRRGPRLGVRATRKTSERSQP) are interaction with EIF2AK2/PKR. The interaction with DDX3X stretch occupies residues 2-59 (STNPKPQRKTKRNTNRRPQDVKFPGGGQIVGGVYLLPRRGPRLGVRATRKTSERSQPR). A disordered region spans residues 2 to 75 (STNPKPQRKT…PKARRPEGRT (74 aa)). Over 2–168 (STNPKPQRKT…EDGVNYATGN (167 aa)) the chain is Cytoplasmic. Short sequence motifs (nuclear localization signal) lie at residues 5–13 (PKPQRKTKR) and 38–43 (PRRGPR). Over residues 7–16 (PQRKTKRNTN) the composition is skewed to basic residues. Residues 32–47 (GGVYLLPRRGPRLGVR) are compositionally biased toward low complexity. Serine 53 is subject to Phosphoserine; by host. Short sequence motifs (nuclear localization signal) lie at residues 58-64 (PRGRRQP) and 66-71 (PKARRP). The segment covering 58-68 (PRGRRQPIPKA) has biased composition (basic residues). Serine 99 carries the phosphoserine; by host modification. Residues 112-152 (PRRRSRNLGKVIDTLTCGFADLMGYIPLVGAPLGGAARALA) form an important for endoplasmic reticulum and mitochondrial localization region. Position 116 is a phosphoserine; by host PKA (serine 116). The interval 122 to 173 (VIDTLTCGFADLMGYIPLVGAPLGGAARALAHGVRVLEDGVNYATGNLPGCS) is interaction with APOA2. The tract at residues 164–167 (YATG) is important for lipid droplets localization. Residues 169 to 189 (LPGCSFSIFLLALLSCLTIPA) traverse the membrane as a helical segment. Residues 178–191 (LLALLSCLTIPASA) constitute a propeptide, ER anchor for the core protein, removed in mature form by host signal peptidase. Residues 190 to 358 (SAYEVRNVSG…AGAHWGVLAG (169 aa)) are Lumenal-facing. Residues asparagine 196, asparagine 209, and asparagine 234 are each glycosylated (N-linked (GlcNAc...) asparagine; by host). The interval 265–296 (LVGAAALCSAMYVGDLCGSVFLVSQLFTFSPR) is important for fusion. A glycan (N-linked (GlcNAc...) asparagine; by host) is linked at asparagine 305. The helical transmembrane segment at 359–379 (LAYYSMVGNWAKVLIVMLLFA) threads the bilayer. Over 380 to 725 (GVDGHTHVTG…WEYILLLFLL (346 aa)) the chain is Lumenal. O-linked (Hex...) threonine; by host glycosylation is found at threonine 385 and threonine 396. The HVR1 stretch occupies residues 385–411 (THVTGGRVASSTQSLVSWLSQGPSQKI). O-linked (Hex...) serine; by host glycans are attached at residues serine 401 and serine 404. Asparagine 417, asparagine 423, asparagine 430, and asparagine 448 each carry an N-linked (GlcNAc...) (high mannose) asparagine; by host glycan. 4 cysteine pairs are disulfide-bonded: cysteine 429/cysteine 552, cysteine 452/cysteine 459, cysteine 486/cysteine 494, and cysteine 503/cysteine 508. Threonine 473 carries O-linked (Hex...) threonine; by host glycosylation. The tract at residues 474–482 (HDMPESSDQ) is HVR2. Residues 480–493 (SDQRPYCWHYAPRP) are CD81-binding 1. O-linked (Hex...) threonine; by host glycosylation occurs at threonine 518. Asparagine 532 carries N-linked (GlcNAc...) (high mannose) asparagine; by host glycosylation. The CD81-binding 2 stretch occupies residues 544–551 (PPQGNWFG). The N-linked (GlcNAc...) (high mannose) asparagine; by host glycan is linked to asparagine 556. Cysteine 564 and cysteine 569 are joined by a disulfide. The N-linked (GlcNAc...) (high mannose) asparagine; by host glycan is linked to asparagine 576. Disulfide bonds link cysteine 581–cysteine 585, cysteine 597–cysteine 620, and cysteine 607–cysteine 644. Asparagine 623 and asparagine 645 each carry an N-linked (GlcNAc...) (high mannose) asparagine; by host glycan. Cysteine 652 and cysteine 677 are oxidised to a cystine. The tract at residues 660-671 (SELSPLLLSTTE) is EIF2AK2/eIF2-alpha phosphorylation homology domain (PePHD). A helical transmembrane segment spans residues 726–746 (LADARVCACLWMMLLIAQAEA). Topologically, residues 747–757 (TLENLVVLNAA) are lumenal. A helical transmembrane segment spans residues 758–778 (SVAGAHGLLSFLVFFCAAWYI). At 779-781 (KGR) the chain is on the cytoplasmic side. Residues 782-803 (LVPGAAYALYGVWPLLLLLLAL) form a helical membrane-spanning segment. Topologically, residues 804 to 813 (PPRAYAMDRE) are lumenal. Residues 814 to 834 (MAASCGGAVFVGLVLLTLSPY) form a helical membrane-spanning segment. The Cytoplasmic segment spans residues 835 to 838 (YKVF). The helical transmembrane segment at 839 to 859 (LARLIWWLQYFITRAEAHLQV) threads the bilayer. Residues 860–881 (WVPPLNVRGGRDAIILLTCAVH) are Lumenal-facing. The chain crosses the membrane as a helical span at residues 882–902 (PELIFDITKLLLAILGPLMVL). Residues 903-1026 (QAGITRVPYF…SFGEQGWRLL (124 aa)) enclose the Peptidase C18 domain. Residues 903–1657 (QAGITRVPYF…CMSADLEVVT (755 aa)) lie on the Cytoplasmic side of the membrane. Residues 904–1206 (AGITRVPYFV…PVESMETTMR (303 aa)) form a protease NS2-3 region. Residue cysteine 922 is the site of S-palmitoyl cysteine; by host attachment. An interaction with host SCPS1 region spans residues 929 to 949 (AGGHYVQMAFMKLAALTGTYV). Residues histidine 952, glutamate 972, and cysteine 993 each act as for protease NS2 activity; shared with dimeric partner in the active site. The Peptidase S29 domain maps to 1027–1208 (APITAYSQQT…ESMETTMRSP (182 aa)). Catalysis depends on charge relay system; for serine protease NS3 activity residues histidine 1083 and aspartate 1107. Zn(2+) is bound by residues cysteine 1123 and cysteine 1125. Serine 1165 serves as the catalytic Charge relay system; for serine protease NS3 activity. The Zn(2+) site is built by cysteine 1171 and histidine 1175. In terms of domain architecture, Helicase ATP-binding spans 1217–1369 (PAVPQTFQVA…PNIEEVALSN (153 aa)). ATP is bound at residue 1230-1237 (APTGSGKS). 2 residues coordinate Mg(2+): serine 1237 and glutamate 1317. The DECH box motif lies at 1316 to 1319 (DECH). The interval 1486–1497 (QRRGRTGRGRSG) is RNA-binding. Residues 1658–1678 (STWVLVGGVLAALAAYCLTTG) form a helical membrane-spanning segment. The interval 1679–1690 (SVVIVGRIILSG) is NS3-binding. The Cytoplasmic segment spans residues 1679-1805 (SVVIVGRIIL…SITSPLTTQN (127 aa)). The helical transmembrane segment at 1806–1826 (TLLFNILGGWVAAQLAPPSAA) threads the bilayer. Residues 1827 to 1828 (SA) are Lumenal-facing. Residues 1829 to 1849 (FVGAGIAGAAVGSIGLGKVLV) traverse the membrane as a helical segment. Residues 1833-1861 (GIAGAAVGSIGLGKVLVDILAGYGAGVAG) form a glycine zipper region. Position 1850 (aspartate 1850) is a topological domain, cytoplasmic. The chain crosses the membrane as a helical span at residues 1851-1871 (ILAGYGAGVAGALVAFKVMSG). The Lumenal portion of the chain corresponds to 1872 to 1881 (EMPSTEDLVN). A helical membrane pass occupies residues 1882–1902 (LLPAILSPGALVVGVVCAAIL). At 1903-1972 (RRHVGPGEGA…WINEDCSTPC (70 aa)) the chain is on the cytoplasmic side. 2 S-palmitoyl cysteine; by host lipidation sites follow: cysteine 1968 and cysteine 1972. Residues 1973–2002 (SGSWLKDVWDWICTVLSDFKTWLQSKLLPR) lie within the membrane without spanning it. Residues 1978–1998 (KDVWDWICTVLSDFKTWLQSK) form a membrane-binding region. Residues 2003–2989 (LPGLPFLSCQ…YHSLSRARPR (987 aa)) are Cytoplasmic-facing. Residues 2005-2221 (GLPFLSCQRG…KATCTTHHDS (217 aa)) form an RNA-binding region. The Zn(2+) site is built by cysteine 2011, cysteine 2029, cysteine 2031, and cysteine 2052. The tract at residues 2120–2208 (EFFTEVDGVR…ASSSASQLSA (89 aa)) is FKBP8-binding. The interval 2120-2332 (EFFTEVDGVR…PIPPPRRKRT (213 aa)) is transcriptional activation. Residues 2135 to 2139 (PVCKP) are interaction with non-structural protein 4A. The interval 2187–2219 (KRRLARGSPPSLASSSASQLSAPSLKATCTTHH) is disordered. The segment at 2189–2441 (RLARGSPPSL…PCAAEESKLP (253 aa)) is interaction with host SKP2. Residue serine 2194 is modified to Phosphoserine; by host; in p56. The segment covering 2194–2211 (SPPSLASSSASQLSAPSL) has biased composition (low complexity). Phosphoserine; by host; in p58 occurs at positions 2197, 2201, 2204, 2207, and 2210. ISDR regions lie at residues 2206–2245 (LSAPSLKATCTTHHDSPDADLIEANLLWRQEMGGNITRVE) and 2210–2249 (SLKATCTTHHDSPDADLIEANLLWRQEMGGNITRVESENK). An EIF2AK2/PKR-binding region spans residues 2210-2275 (SLKATCTTHH…REISVPAEIL (66 aa)). The tract at residues 2249-2306 (KVVILDSFDPIRAVEDEREISVPAEILRKPRKFPPALPIWARPDYNPPLLESWKDPDY) is NS4B-binding. The short motif at 2322–2325 (PPIP) is the SH3-binding element. The short motif at 2326-2334 (PPRRKRTVV) is the Nuclear localization signal element. The segment at 2332–2441 (TVVLTESTVS…PCAAEESKLP (110 aa)) is interaction with host IFI27. A Glycyl lysine isopeptide (Lys-Gly) (interchain with G-Cter in ubiquitin) cross-link involves residue lysine 2350. Positions 2351–2365 (TFGSSGSSAVDSGTA) are enriched in polar residues. The interval 2351–2408 (TFGSSGSSAVDSGTATGPPDQASDDGDKGSDVESYSSMPPLEGEPGDPDLSDGSWSTV) is disordered. Positions 2354 to 2377 (SSGSSAVDSGTATGPPDQASDDGD) are V3. Residues serine 2448 and serine 2461 each carry the phosphoserine; by host modification. Residues 2633-2751 (PMGFSYDTRC…ICESAGTQED (119 aa)) enclose the RdRp catalytic domain. Mg(2+) contacts are provided by aspartate 2639, aspartate 2737, and aspartate 2738. Residues 2990–3010 (WFMLCLLLLSVGVGIYLLPNR) form a helical membrane-spanning segment.

The protein belongs to the hepacivirus polyprotein family. As to quaternary structure, homooligomer. Interacts with E1 (via C-terminus). Interacts with the non-structural protein 5A. Interacts (via N-terminus) with host STAT1 (via SH2 domain); this interaction results in decreased STAT1 phosphorylation and ubiquitin-mediated proteasome-dependent STAT1 degradation, leading to decreased IFN-stimulated gene transcription. Interacts with host STAT3; this interaction constitutively activates STAT3. Interacts with host LTBR receptor. Interacts with host TNFRSF1A receptor and possibly induces apoptosis. Interacts with host HNRPK. Interacts with host YWHAE. Interacts with host UBE3A/E6AP. Interacts with host DDX3X. Interacts with host APOA2. Interacts with host RXRA protein. Interacts with host SP110 isoform 3/Sp110b; this interaction sequesters the transcriptional corepressor SP110 away from the nucleus. Interacts with host CREB3 nuclear transcription protein; this interaction triggers cell transformation. Interacts with host ACY3. Interacts with host C1QR1. Interacts with host RBM24; this interaction, which enhances the interaction of the mature core protein with 5'-UTR, may inhibit viral translation and favor replication. Interacts with host EIF2AK2/PKR; this interaction induces the autophosphorylation of EIF2AK2. Part of the viral assembly initiation complex composed of NS2, E1, E2, NS3, NS4A, NS5A and the mature core protein. Forms a heterodimer with envelope glycoprotein E2. Interacts with mature core protein. Interacts with protease NS2. The heterodimer E1/E2 interacts with host CLDN1; this interaction plays a role in viral entry into host cell. Interacts with host SPSB2 (via C-terminus). Part of the viral assembly initiation complex composed of NS2, E1, E2, NS3, NS4A, NS5A and the mature core protein. Interacts with host NEURL3; this interaction prevents E1 binding to glycoprotein E2. In terms of assembly, forms a heterodimer with envelope glycoprotein E1. Interacts with host CD81 and SCARB1 receptors; these interactions play a role in viral entry into host cell. Interacts with host EIF2AK2/PKR; this interaction inhibits EIF2AK2 and probably allows the virus to evade the innate immune response. Interacts with host CD209/DC-SIGN and CLEC4M/DC-SIGNR. Interact with host SPCS1; this interaction is essential for viral particle assembly. Interacts with protease NS2. The heterodimer E1/E2 interacts with host CLDN1; this interaction plays a role in viral entry into host cell. Part of the viral assembly initiation complex composed of NS2, E1, E2, NS3, NS4A, NS5A and the mature core protein. Interacts with host SLC3A2/4F2hc; the interaction may facilitate viral entry into host cell. Interacts with human PLSCR1. As to quaternary structure, homohexamer. Homoheptamer. Interacts with protease NS2. Homodimer. Interacts with host SPCS1; this interaction is essential for viral particle assembly. Interacts with envelope glycoprotein E1. Interacts with envelope glycoprotein E2. Interacts with viroporin p7. Interacts with serine protease/helicase NS3. Part of the replication complex composed of NS2, NS3, NS4A, NS4B, NS5A and the RNA-directed RNA polymerase embedded in an ER-derived membranous web. Part of the viral assembly initiation complex composed of NS2, E1, E2, NS3, NS4A, NS5A and the mature core protein. In terms of assembly, interacts with protease NS2. Interacts with non-structural protein 4A; this interaction stabilizes the folding of NS3 serine protease. NS3-NS4A interaction is essential for NS3 activation and allows membrane anchorage of the latter. NS3/NS4A complex also prevents phosphorylation of host IRF3, thus preventing the establishment of dsRNA induced antiviral state. Interacts with host MAVS; this interaction leads to the cleavage and inhibition of host MAVS. Interacts with host TICAM1; this interaction leads to the cleavage and inhibition of host TICAM1. Interacts with host TANK-binding kinase/TBK1; this interaction results in the inhibition of the association between TBK1 and IRF3, which leads to the inhibition of IRF3 activation. Interacts with host RBM24. Part of the replication complex composed of NS2, NS3, NS4A, NS4B, NS5A and the RNA-directed RNA polymerase embedded in an ER-derived membranous web. Part of the viral assembly initiation complex composed of NS2, E1, E2, NS3, NS4A, NS5A and the mature core protein. As to quaternary structure, interacts with NS3 serine protease; this interaction stabilizes the folding of NS3 serine protease. NS3-NS4A interaction is essential for NS3 activation and allows membrane anchorage of the latter. Interacts with non-structural protein 5A (via N-terminus). Part of the replication complex composed of NS2, NS3, NS4A, NS4B, NS5A and the RNA-directed RNA polymerase embedded in an ER-derived membranous web. Part of the viral assembly initiation complex composed of NS2, E1, E2, NS3, NS4A, NS5A and the mature core protein. Homomultimer. Interacts with non-structural protein NS5A. Interacts with host PLA2G4C; this interaction likely initiates the recruitment of replication complexes to lipid droplets. Interacts with host STING; this interaction disrupts the interaction between STING and TBK1 thereby suppressing the interferon signaling. Part of the replication complex composed of NS2, NS3, NS4A, NS4B, NS5A and the RNA-directed RNA polymerase embedded in an ER-derived membranous web. In terms of assembly, monomer. Homodimer; dimerization is required for RNA-binding. Interacts with the mature core protein. Interacts (via N-terminus) with non-structural protein 4A. Interacts with non-structural protein 4B. Interacts with RNA-directed RNA polymerase. Part of the viral assembly initiation complex composed of NS2, E1, E2, NS3, NS4A, NS5A and the mature core protein. Part of the replication complex composed of NS2, NS3, NS4A, NS4B, NS5A and the RNA-directed RNA polymerase. Interacts with host GRB2. Interacts with host BIN1. Interacts with host PIK3R1. Interacts with host SRCAP. Interacts with host FKBP8. Interacts with host VAPB. Interacts with host EIF2AK2/PKR; this interaction leads to disruption of EIF2AK2 dimerization by NS5A and probably allows the virus to evade the innate immune response. Interacts (via N-terminus) with host PACSIN2 (via N-terminus); this interaction attenuates protein kinase C alpha-mediated phosphorylation of PACSIN2 by disrupting the interaction between PACSIN2 and PRKCA. Interacts (via N-terminus) with host SRC kinase (via SH2 domain). Interacts with most Src-family kinases. Interacts with host IFI27 and SKP2; promotes the ubiquitin-mediated proteasomal degradation of NS5A. Interacts with host GPS2. Interacts with host TNFRSF21; this interaction allows the modulation by the virus of JNK, p38 MAPK, STAT3, and Akt signaling pathways in a DR6-dependent manner. Interacts (via N-terminus) with host CIDEB (via N-terminus); this interaction seems to regulate the association of HCV particles with APOE. Interacts with host CHKA/Choline Kinase-alpha; CHKA bridges host PI4KA and NS5A and potentiates NS5A-stimulated PI4KA activity, which then facilitates the targeting of the ternary complex to the ER for viral replication. Interacts with host SPSB2 (via C-terminus); this interaction targets NS5A for ubiquitination and degradation. Interacts with host RAB18; this interaction may promote the association of NS5A and other replicase components with lipid droplets. Interacts (via region D2) with host PPIA/CYPA; the interaction stimulates RNA-binding ability of NS5A and is dependent on the peptidyl-prolyl cis-trans isomerase activity of PPIA/CYPA. Interacts with host TRIM14; this interaction induces the degradation of NS5A. As to quaternary structure, homooligomer. Interacts with non-structural protein 5A. Interacts with host VAPB. Interacts with host PRK2/PKN2. Interacts with host HNRNPA1 and SEPT6; these interactions facilitate the viral replication. Part of the replication complex composed of NS2, NS3, NS4A, NS4B, NS5A and the RNA-directed RNA polymerase. Zn(2+) is required as a cofactor. It depends on Mg(2+) as a cofactor. Specific enzymatic cleavages in vivo yield mature proteins. The structural proteins, core, E1, E2 and p7 are produced by proteolytic processing by host signal peptidases. The core protein is synthesized as a 23 kDa precursor which is retained in the ER membrane through the hydrophobic signal peptide. Cleavage by the signal peptidase releases the 21 kDa mature core protein. The cleavage of the core protein precursor occurs between aminoacids 176 and 188 but the exact cleavage site is not known. Some degraded forms of the core protein appear as well during the course of infection. The other proteins (p7, NS2, NS3, NS4A, NS4B, NS5A and NS5B) are cleaved by the viral proteases. Autoprocessing between NS2 and NS3 is mediated by the NS2 cysteine protease catalytic domain and regulated by the NS3 N-terminal domain. Post-translationally, phosphorylated by host PKC and PKA. In terms of processing, ubiquitinated; mediated by UBE3A and leading to core protein subsequent proteasomal degradation. Highly N-glycosylated. Post-translationally, palmitoylation is required for NS2/3 autoprocessing and E2 recruitment to membranes. In terms of processing, palmitoylated. This modification may play a role in its polymerization or in protein-protein interactions. Cleaved by host caspases which are probably activated by the viral infection. Post-translationally, ubiquitinated. Ubiquitination, most probably at Lys-2350, mediated by host IFI27 and SKP2 leads to proteasomal degradation, restricting viral infection. In terms of processing, phosphorylated on serines in a basal form termed p56. p58 is a hyperphosphorylated form of p56. p56 and p58 coexist in the cell in roughly equivalent amounts. Hyperphosphorylation is dependent on the presence of NS4A. Host CSNK1A1/CKI-alpha or RPS6KB1 kinases may be responsible for NS5A phosphorylation. Phosphorylated NS5A is involved in viral replication. Tyrosine phosphorylation is essential for the interaction with host SRC. Post-translationally, the N-terminus is phosphorylated by host PRK2/PKN2.

It is found in the host endoplasmic reticulum membrane. Its subcellular location is the host mitochondrion membrane. The protein localises to the virion. The protein resides in the host cytoplasm. It localises to the host nucleus. It is found in the host lipid droplet. Its subcellular location is the virion membrane. The protein localises to the host mitochondrion. The protein resides in the host cell membrane. It localises to the host perinuclear region. It catalyses the reaction Hydrolysis of four peptide bonds in the viral precursor polyprotein, commonly with Asp or Glu in the P6 position, Cys or Thr in P1 and Ser or Ala in P1'.. It carries out the reaction a ribonucleoside 5'-triphosphate + H2O = a ribonucleoside 5'-diphosphate + phosphate + H(+). The enzyme catalyses ATP + H2O = ADP + phosphate + H(+). The catalysed reaction is RNA(n) + a ribonucleoside 5'-triphosphate = RNA(n+1) + diphosphate. Its activity is regulated as follows. Inhibited by the antiviral drug hexamethylene amiloride. Inhibition by amantadine appears to be genotype-dependent. Also inhibited by long-alkyl-chain iminosugar derivatives. Activity is up-regulated by PRK2/PKN2-mediated phosphorylation. Packages viral RNA to form a viral nucleocapsid, and promotes virion budding. Participates in the viral particle production as a result of its interaction with the non-structural protein 5A. Binds RNA and may function as a RNA chaperone to induce the RNA structural rearrangements taking place during virus replication. Modulates viral translation initiation by interacting with viral IRES and 40S ribosomal subunit. Affects various cell signaling pathways, host immunity and lipid metabolism. Prevents the establishment of cellular antiviral state by blocking the interferon-alpha/beta (IFN-alpha/beta) and IFN-gamma signaling pathways and by blocking the formation of phosphorylated STAT1 and promoting ubiquitin-mediated proteasome-dependent degradation of STAT1. Activates STAT3 leading to cellular transformation. Regulates the activity of cellular genes, including c-myc and c-fos. May repress the promoter of p53, and sequester CREB3 and SP110 isoform 3/Sp110b in the cytoplasm. Represses cell cycle negative regulating factor CDKN1A, thereby interrupting an important check point of normal cell cycle regulation. Targets transcription factors involved in the regulation of inflammatory responses and in the immune response: suppresses NF-kappa-B activation, and activates AP-1. Binds to dendritic cells (DCs) via C1QR1, resulting in down-regulation of T-lymphocytes proliferation. Alters lipid metabolism by interacting with hepatocellular proteins involved in lipid accumulation and storage. Induces up-regulation of FAS promoter activity, and thereby contributes to the increased triglyceride accumulation in hepatocytes (steatosis). Functionally, forms a heterodimer with envelope glycoprotein E2, which mediates virus attachment to the host cell, virion internalization through clathrin-dependent endocytosis and fusion with host membrane. Fusion with the host cell is most likely mediated by both E1 and E2, through conformational rearrangements of the heterodimer required for fusion rather than a classical class II fusion mechanism. E1/E2 heterodimer binds host apolipoproteins such as APOB and APOE thereby forming a lipo-viro-particle (LVP). APOE associated to the LVP allows the initial virus attachment to cell surface receptors such as the heparan sulfate proteoglycans (HSPGs), syndecan-1 (SDC1), syndecan-1 (SDC2), the low-density lipoprotein receptor (LDLR) and scavenger receptor class B type I (SCARB1). The cholesterol transfer activity of SCARB1 allows E2 exposure and binding of E2 to SCARB1 and the tetraspanin CD81. E1/E2 heterodimer binding on CD81 activates the epithelial growth factor receptor (EGFR) signaling pathway. Diffusion of the complex E1-E2-EGFR-SCARB1-CD81 to the cell lateral membrane allows further interaction with Claudin 1 (CLDN1) and occludin (OCLN) to finally trigger HCV entry. Its function is as follows. Forms a heterodimer with envelope glycoprotein E1, which mediates virus attachment to the host cell, virion internalization through clathrin-dependent endocytosis and fusion with host membrane. Fusion with the host cell is most likely mediated by both E1 and E2, through conformational rearrangements of the heterodimer required for fusion rather than a classical class II fusion mechanism. The interaction between envelope glycoprotein E2 and host apolipoprotein E/APOE allows the proper assembly, maturation and infectivity of the viral particles. This interaction is probably promoted via the up-regulation of cellular autophagy by the virus. E1/E2 heterodimer binds host apolipoproteins such as APOB and APOE thereby forming a lipo-viro-particle (LVP). APOE associated to the LVP allows the initial virus attachment to cell surface receptors such as the heparan sulfate proteoglycans (HSPGs), syndecan-1 (SDC1), syndecan-1 (SDC2), the low-density lipoprotein receptor (LDLR) and scavenger receptor class B type I (SCARB1). The cholesterol transfer activity of SCARB1 allows E2 exposure and binding of E2 to SCARB1 and the tetraspanin CD81. E1/E2 heterodimer binding on CD81 activates the epithelial growth factor receptor (EGFR) signaling pathway. Diffusion of the complex E1-E2-EGFR-SCARB1-CD81 to the cell lateral membrane allows further interaction with Claudin 1 (CLDN1) and occludin (OCLN) to finally trigger HCV entry. Inhibits host EIF2AK2/PKR activation, preventing the establishment of an antiviral state. Viral ligand for CD209/DC-SIGN and CLEC4M/DC-SIGNR, which are respectively found on dendritic cells (DCs), and on liver sinusoidal endothelial cells and macrophage-like cells of lymph node sinuses. These interactions allow the capture of circulating HCV particles by these cells and subsequent facilitated transmission to permissive cells such as hepatocytes and lymphocyte subpopulations. The interaction between E2 and host amino acid transporter complex formed by SLC3A2 and SLC7A5/LAT1 may facilitate viral entry into host cell. In terms of biological role, ion channel protein that acts as a viroporin and plays an essential role in the assembly, envelopment and secretion of viral particles. Regulates the host cell secretory pathway, which induces the intracellular retention of viral glycoproteins and favors assembly of viral particles. Creates a pore in acidic organelles and releases Ca(2+) and H(+) in the cytoplasm of infected cells, leading to a productive viral infection. High levels of cytoplasmic Ca(2+) may trigger membrane trafficking and transport of viral ER-associated proteins to viroplasms, sites of viral genome replication. This ionic imbalance induces the assembly of the inflammasome complex, which triggers the maturation of pro-IL-1beta into IL-1beta through the action of caspase-1. Targets also host mitochondria and induces mitochondrial depolarization. In addition of its role as a viroporin, acts as a lipid raft adhesion factor. Cysteine protease required for the proteolytic auto-cleavage between the non-structural proteins NS2 and NS3. The N-terminus of NS3 is required for the function of NS2 protease (active region NS2-3). Promotes the initiation of viral particle assembly by mediating the interaction between structural and non-structural proteins. Functionally, displays three enzymatic activities: serine protease with a chymotrypsin-like fold, NTPase and RNA helicase. NS3 serine protease, in association with NS4A, is responsible for the cleavages of NS3-NS4A, NS4A-NS4B, NS4B-NS5A and NS5A-NS5B. The NS3/NS4A complex prevents phosphorylation of host IRF3, thus preventing the establishment of dsRNA induced antiviral state. The NS3/NS4A complex induces host amino acid transporter component SLC3A2, thus contributing to HCV propagation. NS3 RNA helicase binds to RNA and unwinds both dsDNA and dsRNA in the 3' to 5' direction, and likely resolves RNA complicated stable secondary structures in the template strand. Binds a single ATP and catalyzes the unzipping of a single base pair of dsRNA. Inhibits host antiviral proteins TBK1 and IRF3 thereby preventing the establishment of an antiviral state. Cleaves host MAVS/CARDIF thereby preventing the establishment of an antiviral state. Cleaves host TICAM1/TRIF, thereby disrupting TLR3 signaling and preventing the establishment of an antiviral state. Its function is as follows. Peptide cofactor which forms a non-covalent complex with the N-terminal of NS3 serine protease. The NS3/NS4A complex prevents phosphorylation of host IRF3, thus preventing the establishment of dsRNA induced antiviral state. The NS3/NS4A complex induces host amino acid transporter component SLC3A2, thus contributing to HCV propagation. In terms of biological role, induces a specific membrane alteration that serves as a scaffold for the virus replication complex. This membrane alteration gives rise to the so-called ER-derived membranous web that contains the replication complex. NS4B self-interaction contributes to its function in membranous web formation. Promotes host TRIF protein degradation in a CASP8-dependent manner thereby inhibiting host TLR3-mediated interferon signaling. Disrupts the interaction between STING and TBK1 contributing to the inhibition of interferon signaling. Phosphorylated protein that is indispensable for viral replication and assembly. Both hypo- and hyperphosphorylated states are required for the viral life cycle. The hyperphosphorylated form of NS5A is an inhibitor of viral replication. Involved in RNA-binding and especially in binding to the viral genome. Zinc is essential for RNA-binding. Participates in the viral particle production as a result of its interaction with the mature viral core protein. Its interaction with host VAPB may target the viral replication complex to vesicles. Down-regulates viral IRES translation initiation. Mediates interferon resistance, presumably by interacting with and inhibiting host EIF2AK2/PKR. Prevents BIN1-induced apoptosis. Acts as a transcriptional activator of some host genes important for viral replication when localized in the nucleus. Via the interaction with host PACSIN2, modulates lipid droplet formation in order to promote virion assembly. Modulates TNFRSF21/DR6 signaling pathway for viral propagation. Functionally, RNA-dependent RNA polymerase that performs primer-template recognition and RNA synthesis during viral replication. Initiates RNA transcription/replication at a flavin adenine dinucleotide (FAD), resulting in a 5'- FAD cap on viral RNAs. In this way, recognition of viral 5' RNA by host pattern recognition receptors can be bypassed, thereby evading activation of antiviral pathways. In Hepatitis C virus genotype 1b (isolate Japanese) (HCV), this protein is Genome polyprotein.